The chain runs to 453 residues: Dihydrolipoyllysine-residue succinyltransferase component of 2-oxoglutarate dehydrogenase complex, mitochondrial (453 aa).

A mitochondrion-targeting transit peptide spans M1–K67. Residues L70 to R144 form the Lipoyl-binding domain. S81 carries the phosphoserine modification. K110 bears the N6-lipoyllysine mark. Residues K152 to A172 are compositionally biased toward low complexity. The disordered stretch occupies residues K152 to E225. K154 is subject to N6-acetyllysine. Residues V173–G196 show a composition bias toward pro residues. 5 positions are modified to N6-acetyllysine: K267, K272, K273, K277, and K307. Active-site residues include H424 and D428.

This sequence belongs to the 2-oxoacid dehydrogenase family. The 2-oxoglutarate dehydrogenase complex is composed of OGDH (2-oxoglutarate dehydrogenase; E1), DLST (dihydrolipoamide succinyltransferase; E2), DLD (dihydrolipoamide dehydrogenase; E3) and the assembly factor KGD4. It contains multiple copies of the three enzymatic components (E1, E2 and E3). In the nucleus, the 2-oxoglutarate dehydrogenase complex associates with KAT2A. Interacts with ABHD11; this interaction maintains the functional lipoylation of the 2-oxoglutarate dehydrogenase complex. It depends on (R)-lipoate as a cofactor.

It is found in the mitochondrion matrix. The protein localises to the nucleus. The catalysed reaction is N(6)-[(R)-dihydrolipoyl]-L-lysyl-[protein] + succinyl-CoA = N(6)-[(R)-S(8)-succinyldihydrolipoyl]-L-lysyl-[protein] + CoA. Its pathway is amino-acid degradation; L-lysine degradation via saccharopine pathway; glutaryl-CoA from L-lysine: step 6/6. It participates in carbohydrate metabolism; tricarboxylic acid cycle. Functionally, dihydrolipoamide succinyltransferase (E2) component of the 2-oxoglutarate dehydrogenase complex. The 2-oxoglutarate dehydrogenase complex catalyzes the overall conversion of 2-oxoglutarate to succinyl-CoA and CO(2). The 2-oxoglutarate dehydrogenase complex is mainly active in the mitochondrion. A fraction of the 2-oxoglutarate dehydrogenase complex also localizes in the nucleus and is required for lysine succinylation of histones: associates with KAT2A on chromatin and provides succinyl-CoA to histone succinyltransferase KAT2A. This Homo sapiens (Human) protein is Dihydrolipoyllysine-residue succinyltransferase component of 2-oxoglutarate dehydrogenase complex, mitochondrial.